A 314-amino-acid chain; its full sequence is Leucine-rich repeat-containing protein 59 (314 aa).

Topologically, residues 1–247 (MNKGKIENIK…VPKAKRSICS (247 aa)) are cytoplasmic. 5 LRR repeats span residues 14 to 35 (DGNE…ELAA), 38 to 60 (KATF…CSLT), 61 to 82 (HLIK…IGQL), 84 to 106 (NLQH…SQLK), and 107 to 126 (SLKW…AKAA). A coiled-coil region spans residues 146-216 (MKVLQEEAEK…AVAAQEQQKK (71 aa)). Disordered regions lie at residues 165–197 (REQE…KERK) and 212–237 (EQQK…APES). The segment covering 215–225 (KKKKEEKKKKA) has biased composition (basic residues). A helical transmembrane segment spans residues 248-268 (LFFSLLLKLVLLLVIGVSSVV). At 269 to 314 (AVCQLTELRKEAFCIPLNVHFEETVRWAQGLDVVQQVIQKMSDLRT) the chain is on the lumenal side.

Interacts with SGO1.

The protein resides in the microsome membrane. Its subcellular location is the endoplasmic reticulum membrane. It is found in the nucleus envelope. Functionally, required for nuclear import of FGF1. The chain is Leucine-rich repeat-containing protein 59 (lrrc59) from Danio rerio (Zebrafish).